The following is a 427-amino-acid chain: Glutamate-1-semialdehyde 2,1-aminomutase (427 aa).

K265 carries the post-translational modification N6-(pyridoxal phosphate)lysine.

This sequence belongs to the class-III pyridoxal-phosphate-dependent aminotransferase family. HemL subfamily. As to quaternary structure, homodimer. The cofactor is pyridoxal 5'-phosphate.

The protein resides in the cytoplasm. The catalysed reaction is (S)-4-amino-5-oxopentanoate = 5-aminolevulinate. It functions in the pathway porphyrin-containing compound metabolism; protoporphyrin-IX biosynthesis; 5-aminolevulinate from L-glutamyl-tRNA(Glu): step 2/2. The chain is Glutamate-1-semialdehyde 2,1-aminomutase from Burkholderia lata (strain ATCC 17760 / DSM 23089 / LMG 22485 / NCIMB 9086 / R18194 / 383).